The chain runs to 470 residues: ATP synthase subunit beta (470 aa).

155-162 (GGAGVGKT) is an ATP binding site.

It belongs to the ATPase alpha/beta chains family. In terms of assembly, F-type ATPases have 2 components, CF(1) - the catalytic core - and CF(0) - the membrane proton channel. CF(1) has five subunits: alpha(3), beta(3), gamma(1), delta(1), epsilon(1). CF(0) has three main subunits: a(1), b(2) and c(9-12). The alpha and beta chains form an alternating ring which encloses part of the gamma chain. CF(1) is attached to CF(0) by a central stalk formed by the gamma and epsilon chains, while a peripheral stalk is formed by the delta and b chains.

It is found in the cell membrane. The enzyme catalyses ATP + H2O + 4 H(+)(in) = ADP + phosphate + 5 H(+)(out). Its function is as follows. Produces ATP from ADP in the presence of a proton gradient across the membrane. The catalytic sites are hosted primarily by the beta subunits. The polypeptide is ATP synthase subunit beta (Staphylococcus haemolyticus (strain JCSC1435)).